The primary structure comprises 158 residues: Transcription elongation factor GreA (158 aa).

Positions 5–75 form a coiled coil; that stretch reads EKLPMLAEGY…DLEDRVSRAQ (71 aa).

This sequence belongs to the GreA/GreB family.

Its function is as follows. Necessary for efficient RNA polymerase transcription elongation past template-encoded arresting sites. The arresting sites in DNA have the property of trapping a certain fraction of elongating RNA polymerases that pass through, resulting in locked ternary complexes. Cleavage of the nascent transcript by cleavage factors such as GreA or GreB allows the resumption of elongation from the new 3'terminus. GreA releases sequences of 2 to 3 nucleotides. The sequence is that of Transcription elongation factor GreA from Novosphingobium aromaticivorans (strain ATCC 700278 / DSM 12444 / CCUG 56034 / CIP 105152 / NBRC 16084 / F199).